The primary structure comprises 639 residues: Probable potassium transport system protein Kup 1 (639 aa).

Residues 1–16 (MALANTGSEAEPVEQS) are compositionally biased toward polar residues. Residues 1–21 (MALANTGSEAEPVEQSSHPEI) are disordered. Transmembrane regions (helical) follow at residues 29-49 (LMLG…IYAF), 67-87 (ILGV…IKYI), 117-137 (AVIL…AVIT), 154-174 (PTFQ…VFAV), 182-202 (VGLV…LSGL), 220-240 (IVAF…AIFL), 260-280 (IVLA…AGQG), 302-322 (ALIP…QAVI), 354-374 (IYMP…VVGF), 383-403 (AYGI…YVVM), 411-431 (LWVA…FFAS), and 436-456 (VFEG…GMWT).

This sequence belongs to the HAK/KUP transporter (TC 2.A.72) family.

The protein localises to the cell inner membrane. The catalysed reaction is K(+)(in) + H(+)(in) = K(+)(out) + H(+)(out). Transport of potassium into the cell. Likely operates as a K(+):H(+) symporter. The polypeptide is Probable potassium transport system protein Kup 1 (Mesorhizobium japonicum (strain LMG 29417 / CECT 9101 / MAFF 303099) (Mesorhizobium loti (strain MAFF 303099))).